A 287-amino-acid chain; its full sequence is ATP synthase gamma chain (287 aa).

Belongs to the ATPase gamma chain family. F-type ATPases have 2 components, CF(1) - the catalytic core - and CF(0) - the membrane proton channel. CF(1) has five subunits: alpha(3), beta(3), gamma(1), delta(1), epsilon(1). CF(0) has three main subunits: a, b and c.

The protein localises to the cell inner membrane. Functionally, produces ATP from ADP in the presence of a proton gradient across the membrane. The gamma chain is believed to be important in regulating ATPase activity and the flow of protons through the CF(0) complex. This Colwellia psychrerythraea (strain 34H / ATCC BAA-681) (Vibrio psychroerythus) protein is ATP synthase gamma chain.